Reading from the N-terminus, the 47-residue chain is Trifunctional NAD biosynthesis/regulator protein NadR (47 aa).

One can recognise an HTH cro/C1-type domain in the interval 7–47; it reads LKSAIKQKGCTLDEVAEPSGMTKGYLSQLLNRKIKARARRS. The H-T-H motif DNA-binding region spans 18–37; that stretch reads LDEVAEPSGMTKGYLSQLLN.

The protein localises to the cell membrane. It localises to the cytoplasm. The catalysed reaction is beta-nicotinamide D-ribonucleotide + ATP + H(+) = diphosphate + NAD(+). It catalyses the reaction beta-nicotinamide D-riboside + ATP = beta-nicotinamide D-ribonucleotide + ADP + H(+). The protein operates within cofactor biosynthesis; NAD(+) biosynthesis [regulation]. It participates in cofactor biosynthesis; NAD(+) biosynthesis; NAD(+) from nicotinamide D-ribonucleotide: step 1/1. Its function is as follows. This enzyme has three activities: DNA binding, nicotinamide mononucleotide (NMN) adenylyltransferase and ribosylnicotinamide (RN) kinase. The DNA-binding domain binds to the nadB operator sequence in an NAD- and ATP-dependent manner. As NAD levels increase within the cell, the affinity of NadR for the nadB operator regions of nadA, nadB, and pncB increases, repressing the transcription of these genes. The RN kinase activity catalyzes the phosphorylation of RN to form nicotinamide ribonucleotide. The NMN adenylyltransferase activity catalyzes the transfer of the AMP moiety of ATP to nicotinamide ribonucleotide to form NAD(+). The NMN adenylyltransferase domain also functions as the NAD and ATP sensor. The sequence is that of Trifunctional NAD biosynthesis/regulator protein NadR (nadR) from Klebsiella pneumoniae.